A 519-amino-acid chain; its full sequence is Probable cytosol aminopeptidase (519 aa).

Residues Lys-283 and Asp-288 each contribute to the Mn(2+) site. Lys-295 is a catalytic residue. Mn(2+) is bound by residues Asp-306, Asp-365, and Glu-367. Arg-369 is an active-site residue.

It belongs to the peptidase M17 family. It depends on Mn(2+) as a cofactor.

Its subcellular location is the cytoplasm. It catalyses the reaction Release of an N-terminal amino acid, Xaa-|-Yaa-, in which Xaa is preferably Leu, but may be other amino acids including Pro although not Arg or Lys, and Yaa may be Pro. Amino acid amides and methyl esters are also readily hydrolyzed, but rates on arylamides are exceedingly low.. The enzyme catalyses Release of an N-terminal amino acid, preferentially leucine, but not glutamic or aspartic acids.. Its function is as follows. Presumably involved in the processing and regular turnover of intracellular proteins. Catalyzes the removal of unsubstituted N-terminal amino acids from various peptides. The sequence is that of Probable cytosol aminopeptidase from Mycobacterium ulcerans (strain Agy99).